A 754-amino-acid polypeptide reads, in one-letter code: 5-methyltetrahydropteroyltriglutamate--homocysteine methyltransferase (754 aa).

5-methyltetrahydropteroyltri-L-glutamate is bound by residues 15–18 (RELK) and lysine 114. Residues 430–432 (IGS) and glutamate 483 contribute to the L-homocysteine site. Residues 430–432 (IGS) and glutamate 483 each bind L-methionine. 5-methyltetrahydropteroyltri-L-glutamate-binding positions include 514–515 (RC) and tryptophan 560. An L-homocysteine-binding site is contributed by aspartate 598. Aspartate 598 serves as a coordination point for L-methionine. Glutamate 604 lines the 5-methyltetrahydropteroyltri-L-glutamate pocket. Residues histidine 641, cysteine 643, and glutamate 665 each contribute to the Zn(2+) site. Histidine 694 serves as the catalytic Proton donor. Position 726 (cysteine 726) interacts with Zn(2+).

The protein belongs to the vitamin-B12 independent methionine synthase family. Zn(2+) is required as a cofactor.

The enzyme catalyses 5-methyltetrahydropteroyltri-L-glutamate + L-homocysteine = tetrahydropteroyltri-L-glutamate + L-methionine. The protein operates within amino-acid biosynthesis; L-methionine biosynthesis via de novo pathway; L-methionine from L-homocysteine (MetE route): step 1/1. In terms of biological role, catalyzes the transfer of a methyl group from 5-methyltetrahydrofolate to homocysteine resulting in methionine formation. The polypeptide is 5-methyltetrahydropteroyltriglutamate--homocysteine methyltransferase (Campylobacter jejuni subsp. doylei (strain ATCC BAA-1458 / RM4099 / 269.97)).